The following is a 519-amino-acid chain: Importin subunit alpha-5 (519 aa).

The IBB domain maps to 1-58 (MSLRPSTKTEIRRIRYKVSVDAEEGRRRREDFLVEIRKSKRNENLMKKRRVKVLPPDY). ARM repeat units lie at residues 103-143 (SPPT…NIAS), 146-185 (SEHTKVVIDHGVVPLFVQLLASPDDDVREQAIWGLGNVAG), 188-228 (IQCR…NFFR), 230-269 (KPSPPFDLVKHVLPVLKRLVYSDDEQVLIDACWALSNLSD), 272-311 (NENIQSVIEAGVVPRLVELLQHASPVVLVPALRCIGNIVS), 314-354 (SQQT…NITA), 357-396 (EEQIQSVIDANLIPSLVNLAQHAEFDIKKEAIWAISNASV), and 400-439 (PNQIKYLVEQNCIKALCDILVCPDLRIILVSLGGLEMILI).

The protein belongs to the importin alpha family. Forms a complex with importin subunit beta-1.

The protein resides in the nucleus envelope. Its function is as follows. Binds to conventional NLS motifs and mediates nuclear protein import across the nuclear envelope. This Arabidopsis thaliana (Mouse-ear cress) protein is Importin subunit alpha-5.